A 216-amino-acid chain; its full sequence is Uracil phosphoribosyltransferase (216 aa).

5-phospho-alpha-D-ribose 1-diphosphate contacts are provided by residues arginine 85, arginine 110, and 135–143; that span reads DPMVATGYS. Uracil-binding positions include isoleucine 200 and 205–207; that span reads GDA. Aspartate 206 provides a ligand contact to 5-phospho-alpha-D-ribose 1-diphosphate.

It belongs to the UPRTase family. The cofactor is Mg(2+).

The catalysed reaction is UMP + diphosphate = 5-phospho-alpha-D-ribose 1-diphosphate + uracil. It participates in pyrimidine metabolism; UMP biosynthesis via salvage pathway; UMP from uracil: step 1/1. Allosterically activated by GTP. In terms of biological role, catalyzes the conversion of uracil and 5-phospho-alpha-D-ribose 1-diphosphate (PRPP) to UMP and diphosphate. This is Uracil phosphoribosyltransferase from Burkholderia ambifaria (strain MC40-6).